The primary structure comprises 108 residues: Probable endonuclease 4 (108 aa).

Residues H2, H36, D49, H51, and E81 each contribute to the Zn(2+) site.

The protein belongs to the AP endonuclease 2 family. It depends on Zn(2+) as a cofactor.

The enzyme catalyses Endonucleolytic cleavage to 5'-phosphooligonucleotide end-products.. In terms of biological role, endonuclease IV plays a role in DNA repair. It cleaves phosphodiester bonds at apurinic or apyrimidinic (AP) sites, generating a 3'-hydroxyl group and a 5'-terminal sugar phosphate. The chain is Probable endonuclease 4 (nfo) from Thermotoga neapolitana.